A 284-amino-acid polypeptide reads, in one-letter code: MKLDGYTRLTAVVANPIKHSISPFIHNRAFEATATNGAYVAWEIEASDLAETVANIRRYQMFGINLSMPYKEQVIPYLDKLSDEARLIGAVNTVVNENGNLIGYNTDGKGFFKCLPSFTISGKKMTLLGAGGAAKSILAQAILDGVSQISVFVRSVSMEKTRPYLDKLQEQTGFKVDLCALEYVSELQARIAESDLLVNATSVGMDGQSSPVPENIVLPETLLVADIIYQPFETPFLKWARSQGNPAVNGLGMLLYQAAEAFQLWTGKEMPTEEIWQSLTEKYQ.

Shikimate is bound by residues 20-22 (SIS) and S67. K71 functions as the Proton acceptor in the catalytic mechanism. D83 contacts NADP(+). 2 residues coordinate shikimate: N92 and D107. Residues 129 to 133 (GAGGA) and I227 each bind NADP(+). Shikimate is bound at residue Y229. Residue G250 coordinates NADP(+).

The protein belongs to the shikimate dehydrogenase family. In terms of assembly, homodimer.

The enzyme catalyses shikimate + NADP(+) = 3-dehydroshikimate + NADPH + H(+). Its pathway is metabolic intermediate biosynthesis; chorismate biosynthesis; chorismate from D-erythrose 4-phosphate and phosphoenolpyruvate: step 4/7. Involved in the biosynthesis of the chorismate, which leads to the biosynthesis of aromatic amino acids. Catalyzes the reversible NADPH linked reduction of 3-dehydroshikimate (DHSA) to yield shikimate (SA). The protein is Shikimate dehydrogenase (NADP(+)) of Streptococcus pneumoniae (strain Taiwan19F-14).